Here is a 263-residue protein sequence, read N- to C-terminus: Mannose-specific lectin 2 (263 aa).

An N-terminal signal peptide occupies residues 1–24; that stretch reads MAKSLVLSSLLLALLLAAPLASLA. Bulb-type lectin domains lie at 26-136 and 150-260; these read NNVL…APNR and RNVL…SSAS. Intrachain disulfides connect cysteine 54/cysteine 76 and cysteine 178/cysteine 203.

In terms of assembly, heterotetramer of 2 domain 1 and 2 domain 2 chains arranged as a dimer of domain 1/domain 2 heterodimers.

Its function is as follows. Mannose-specific lectin. Has weak agglutinating activity towards trypsin-treated erythrocytes from rabbit but not from human. The sequence is that of Mannose-specific lectin 2 from Crocus vernus (Dutch crocus).